Here is a 375-residue protein sequence, read N- to C-terminus: Putative nuclease YhcG (375 aa).

As to quaternary structure, interacts with DNA processing enzymes, including the restriction complex HsdMRS, the integrases IntF and IntS, and the recombinase PinE.

Functionally, may be a nuclease involved in DNA recombination and repair. This Escherichia coli (strain K12) protein is Putative nuclease YhcG (yhcG).